The following is a 319-amino-acid chain: Cytochrome f (319 aa).

The signal sequence occupies residues 1–35; the sequence is METRNIFSWIKEQITRSISVSLMIYIITRTAVSNA. Heme-binding residues include Tyr-36, Cys-56, Cys-59, and His-60. The helical transmembrane segment at 285 to 305 threads the bilayer; the sequence is VQGLLFFLASVILAQIFLVLK.

The protein belongs to the cytochrome f family. The 4 large subunits of the cytochrome b6-f complex are cytochrome b6, subunit IV (17 kDa polypeptide, petD), cytochrome f and the Rieske protein, while the 4 small subunits are PetG, PetL, PetM and PetN. The complex functions as a dimer. It depends on heme as a cofactor.

The protein localises to the plastid. It localises to the chloroplast thylakoid membrane. In terms of biological role, component of the cytochrome b6-f complex, which mediates electron transfer between photosystem II (PSII) and photosystem I (PSI), cyclic electron flow around PSI, and state transitions. This chain is Cytochrome f, found in Coffea arabica (Arabian coffee).